The chain runs to 285 residues: Methylamine utilization protein MauF (285 aa).

Transmembrane regions (helical) follow at residues 39–59 (LGGLVTAVSGGILGAALLSQT), 63–83 (GVAVPALLMGLSFVGGLLSTW), 120–140 (AVGALILGCVLGIAGGLLGFG), 144–164 (FGALAGLGAAGIIYGAHQLGF), 184–204 (FPVWFIGGLYGLSLGLNYLTY), 209–229 (ILYLVTAAAVLSSNIGAAILL), and 265–285 (ALLDGVLLVAGGAALLTFAAL).

It is found in the cell membrane. Its pathway is one-carbon metabolism; methylamine degradation. The sequence is that of Methylamine utilization protein MauF (mauF) from Methylorubrum extorquens (strain ATCC 14718 / DSM 1338 / JCM 2805 / NCIMB 9133 / AM1) (Methylobacterium extorquens).